The chain runs to 430 residues: Dihydroorotase (430 aa).

Positions 60 and 62 each coordinate Zn(2+). Residues 62–64 (HFR) and Asn94 each bind substrate. The Zn(2+) site is built by Asp151, His178, and His231. Asn277 is a substrate binding site. Residue Asp304 participates in Zn(2+) binding. Asp304 is an active-site residue. Substrate-binding positions include His308 and 322 to 323 (FG).

It belongs to the metallo-dependent hydrolases superfamily. DHOase family. Class I DHOase subfamily. Zn(2+) serves as cofactor.

The catalysed reaction is (S)-dihydroorotate + H2O = N-carbamoyl-L-aspartate + H(+). Its pathway is pyrimidine metabolism; UMP biosynthesis via de novo pathway; (S)-dihydroorotate from bicarbonate: step 3/3. In terms of biological role, catalyzes the reversible cyclization of carbamoyl aspartate to dihydroorotate. This Carboxydothermus hydrogenoformans (strain ATCC BAA-161 / DSM 6008 / Z-2901) protein is Dihydroorotase.